A 280-amino-acid polypeptide reads, in one-letter code: MGGWIDEEHRGVRYGLAGDVLVEETSPFQRISVIRSERYGKGLLLDGCWMTAEQQERHYHEALVHPALCSAEAIERVLVIGGGDGGTARECLRYPEVIHLDLVEIDGRVVELSQEHLPGIGGAVWSDSRCQLTVGDGIAWAANAPDQSYDVVLVDGSDPAGPAEGLFNRAFFEHCRRILKPGGVFATQSESPEAFREVHVAMVRLLREVFGHADPLYGWVPMYPSGWWSWTFAAVDGPRYRTVQPARAALVAEGCEIWSPRWQQGALDAVPAFIARELAP.

The PABS domain maps to 2 to 235; sequence GGWIDEEHRG…GWWSWTFAAV (234 aa). Residue Gln29 participates in S-methyl-5'-thioadenosine binding. The spermidine site is built by His60 and Asp84. S-methyl-5'-thioadenosine-binding positions include Glu104 and 136–137; that span reads DG. Asp155 serves as the catalytic Proton acceptor. Pro162 lines the S-methyl-5'-thioadenosine pocket.

The protein belongs to the spermidine/spermine synthase family. As to quaternary structure, homodimer or homotetramer.

It localises to the cytoplasm. It catalyses the reaction S-adenosyl 3-(methylsulfanyl)propylamine + putrescine = S-methyl-5'-thioadenosine + spermidine + H(+). It participates in amine and polyamine biosynthesis; spermidine biosynthesis; spermidine from putrescine: step 1/1. Functionally, catalyzes the irreversible transfer of a propylamine group from the amino donor S-adenosylmethioninamine (decarboxy-AdoMet) to putrescine (1,4-diaminobutane) to yield spermidine. This Parasynechococcus marenigrum (strain WH8102) protein is Polyamine aminopropyltransferase.